We begin with the raw amino-acid sequence, 446 residues long: Protein odr-4 homolog (446 aa).

Residues 76 to 96 (ASQVGRMLPGGLMVLGVFLMT) traverse the membrane as a helical segment. Residues 394-415 (HPEKRESEPASQHLESKPENKA) are compositionally biased toward basic and acidic residues. Positions 394–417 (HPEKRESEPASQHLESKPENKARS) are disordered. Residues 426 to 446 (GLVISTIVASIAIIISFYYIM) form a helical membrane-spanning segment.

It belongs to the ODR-4 family.

Its subcellular location is the membrane. Functionally, may play a role in the trafficking of a subset of G-protein coupled receptors. This is Protein odr-4 homolog (odr4) from Xenopus laevis (African clawed frog).